Consider the following 236-residue polypeptide: Phosphoribosylaminoimidazole-succinocarboxamide synthase (236 aa).

The protein belongs to the SAICAR synthetase family.

The catalysed reaction is 5-amino-1-(5-phospho-D-ribosyl)imidazole-4-carboxylate + L-aspartate + ATP = (2S)-2-[5-amino-1-(5-phospho-beta-D-ribosyl)imidazole-4-carboxamido]succinate + ADP + phosphate + 2 H(+). Its pathway is purine metabolism; IMP biosynthesis via de novo pathway; 5-amino-1-(5-phospho-D-ribosyl)imidazole-4-carboxamide from 5-amino-1-(5-phospho-D-ribosyl)imidazole-4-carboxylate: step 1/2. The chain is Phosphoribosylaminoimidazole-succinocarboxamide synthase from Rickettsia massiliae (strain Mtu5).